The primary structure comprises 508 residues: Lysine--tRNA ligase (508 aa).

E418 and E425 together coordinate Mg(2+).

Belongs to the class-II aminoacyl-tRNA synthetase family. Homodimer. Mg(2+) is required as a cofactor.

The protein resides in the cytoplasm. The enzyme catalyses tRNA(Lys) + L-lysine + ATP = L-lysyl-tRNA(Lys) + AMP + diphosphate. The chain is Lysine--tRNA ligase from Burkholderia cenocepacia (strain HI2424).